The chain runs to 388 residues: Trans-enoyl reductase tenC (388 aa).

51–54 (VDGK) contacts NADP(+). 142–149 (VGVASVGM) provides a ligand contact to substrate. Residues 219–222 (SSES), tyrosine 237, and 284–285 (LD) contribute to the NADP(+) site. 304-308 (SFTQF) is a substrate binding site. Residue 373 to 374 (IK) participates in NADP(+) binding.

This sequence belongs to the zinc-containing alcohol dehydrogenase family. In terms of assembly, monomer.

It participates in secondary metabolite biosynthesis. Functionally, trans-enoyl reductase; part of the gene cluster that mediates the biosynthesis of tenellin-type 2-pyridones, iron-chelating compounds involved in iron stress tolerance, competition with the natural competitor fungus Metarhizium robertsii and insect hosts infection. TenC collaborates with the hybrid PKS-NRPS synthetase tenS to catalyze the assembly of the polyketide-amino acid backbone, since tenS lacks a designated enoylreductase (ER) domain. Upon formation of the polyketide backbone on the thiotemplate of tenS, the triketide is transferred to the NRPS module and linked to tyrosine to produce the pyrrolidine-2-dione intermediates, including pretellinin A, 11-hydropretellenin A, 12-hydropretellenin A, 13-hydropretellenin A, 14-hydropretellenin A, 12-oxopretellenin A and prototellinin D. The pathway begins with the assembly of the polyketide-amino acid backbone by the hybrid PKS-NRPS tenS with the help of the enoyl reductase tenC. These enzymes catalyze the synthesis of the pyrrolidine-2-dione intermediates pretellinin A, 11-hydropretellenin A, 12-hydropretellenin A, 13-hydropretellenin A, 14-hydropretellenin A, 12-oxopretellenin A and prototellinin D. The cytochrome P450 monooxygenase tenA then catalyzes an oxidative ring expansion of pretenellin A and 14-hydropretellenin A to form the 2-pyridone core, leading to pretenellin B and pyridovericin, respectively. The cytochrome P450 monooxygenase tenB is then required for the selective N-hydroxylation of the 2-pyridone nitrogen of yield tellinin and 15-hydroxytellenin (15-HT), respectively. The UDP-glucosyltransferase GT1 and the methyltransferase MT1, located outside the tenS gene cluster, contribute to the stepwise glycosylation and methylation of 15-HT to obtain the glycoside pyridovericin-N-O-(4-O-methyl-beta-D-glucopyranoside) (PMGP). Additional related compounds such as 1-O-methyl-15-HT, (8Z)-1-O-methyl-15-HT, and O-methyltenellin A are also produced but the enzymes involved in their biosynthesis have still to be determined. This is Trans-enoyl reductase tenC from Beauveria bassiana (White muscardine disease fungus).